A 440-amino-acid polypeptide reads, in one-letter code: C-terminal-binding protein 1 (440 aa).

Positions 1–70 (MGSSHLLNKG…EIHEKVLNEA (70 aa)) are interaction with GLIS2 1. NAD(+) contacts are provided by residues Ser100, 180-185 (IGLGRV), Asp204, 237-243 (CGLNEHN), 264-266 (TAR), and Asp290. Residue Arg266 is part of the active site. Residues 288–360 (ALDVHESEPF…VNKDHLTAAT (73 aa)) form an interaction with GLIS2 2 region. Glu295 is an active-site residue. The residue at position 300 (Ser300) is a Phosphoserine. The Proton donor role is filled by His315. 315–318 (HAAW) contributes to the NAD(+) binding site. Residues 408-440 (SHGLPPVAHPPHAPSPGQTVKPEADRDHASDQL) are disordered. At Ser422 the chain carries Phosphoserine; by HIPK2. A Glycyl lysine isopeptide (Lys-Gly) (interchain with G-Cter in SUMO) cross-link involves residue Lys428. Positions 429-440 (PEADRDHASDQL) are enriched in basic and acidic residues.

This sequence belongs to the D-isomer specific 2-hydroxyacid dehydrogenase family. Homo- or heterodimer. Heterodimer with CTBP2. Interacts with PRDM16; the interaction represses white adipose tissue (WAT)-specific genes expression. Interacts with GLIS2, FOXP2, HDAC4, HDAC5, HDAC9 and ZNF217. Interacts with ELK3 (via its PXDLS motif). Interacts with RBBP8 (via its PXDLS motif); the interaction is disrupted by binding to adenovirus E1A. Interacts with FOXP1, HIPK2, PNN, NRIP1, MECOM, ZFHX1B and WIZ. Interacts with ZNF366 (via PXDLS motif). Interaction with SATB1 (non-acetylated form); the interaction stabilizes its attachment to DNA and promotes transcription repression. Interacts with BCL6; the interaction is required for BCL6 transcriptional autoinhibition and inhibition of some BCL6 target genes. Interacts with IKZF4. Interacts with MCRIP1 (unphosphorylated form, via the PXDLS motif); competitively inhibiting CTBP-ZEB1 interaction. Interacts with Bassoon/BSN; this interaction targets and anchors CTBP1 to presynapses. Interacts with SIMC1. As to quaternary structure, (Microbial infection) Interacts with Epstein-Barr virus EBNA3. Interacts with Epstein-Barr virus EBNA6; this interaction leads to gene repression, but also seems to interfere with the repressive function of CtBP pre-bound to DNA, leading to EBNA6 mediated up-regulation of many cellular genes. In terms of assembly, (Microbial infection) Interacts with adenovirus E1A protein (via its C-terminus); the interaction disrupts the interaction of CTBP1 with RBBP8. (Microbial infection) Interacts with human adenovirus 5 E1A protein; this interaction seems to potentiate viral replication. NAD(+) serves as cofactor. The level of phosphorylation appears to be regulated during the cell cycle. Phosphorylation by HIPK2 on Ser-422 induces proteasomal degradation. Post-translationally, ADP-ribosylated; when cells are exposed to brefeldin A. In terms of processing, sumoylation on Lys-428 is promoted by the E3 SUMO-protein ligase CBX4. As to expression, expressed in germinal center B-cells.

It localises to the cytoplasm. The protein localises to the nucleus. Its function is as follows. Corepressor targeting diverse transcription regulators such as GLIS2 or BCL6. Has dehydrogenase activity. Involved in controlling the equilibrium between tubular and stacked structures in the Golgi complex. Functions in brown adipose tissue (BAT) differentiation. The chain is C-terminal-binding protein 1 (CTBP1) from Homo sapiens (Human).